Reading from the N-terminus, the 417-residue chain is Phosphoglycerate kinase 2 (417 aa).

At S2 the chain carries N-acetylserine. Phosphoserine occurs at positions 2 and 4. K11 carries the post-translational modification N6-acetyllysine. 6 residues coordinate (2R)-3-phosphoglycerate: V23, D24, F25, N26, Q38, and R39. K48 is modified (N6-acetyllysine). 4 residues coordinate (2R)-3-phosphoglycerate: S62, H63, G65, and R66. An N6-acetyllysine mark is found at K75, K86, and K97. L122 and R123 together coordinate (2R)-3-phosphoglycerate. N6-acetyllysine occurs at positions 131 and 146. 2 residues coordinate (2R)-3-phosphoglycerate: H170 and R171. Y196 is subject to Phosphotyrosine. Position 199 is an N6-acetyllysine (K199). G214 provides a ligand contact to ADP. CDP is bound at residue G214. Residues A215 and K216 each coordinate AMP. A215 serves as a coordination point for ATP. A215 serves as a coordination point for Mg(2+). Mg(2+)-binding residues include A218 and D219. A CDP-binding site is contributed by D219. Residue K220 coordinates AMP. K220 is a binding site for ATP. G238 contacts ADP. A CDP-binding site is contributed by G238. G239 contacts AMP. Residue G239 coordinates ATP. N6-acetyllysine is present on residues K267 and K291. AMP is bound at residue G313. G313 is an ATP binding site. CDP contacts are provided by G338 and F343. F343 serves as a coordination point for ADP. E344 contacts AMP. ATP-binding residues include E344, D375, and T376. D375 provides a ligand contact to Mg(2+).

Belongs to the phosphoglycerate kinase family. Monomer. Mg(2+) serves as cofactor.

The protein localises to the cytoplasm. It catalyses the reaction (2R)-3-phosphoglycerate + ATP = (2R)-3-phospho-glyceroyl phosphate + ADP. The protein operates within carbohydrate degradation; glycolysis; pyruvate from D-glyceraldehyde 3-phosphate: step 2/5. Essential for sperm motility and male fertility but is not required for the completion of spermatogenesis. The protein is Phosphoglycerate kinase 2 (PGK2) of Macaca fascicularis (Crab-eating macaque).